Reading from the N-terminus, the 492-residue chain is Serine carboxypeptidase-like 31 (492 aa).

Positions 1 to 30 (MDNYQTKNISNLLTSLCFTTLLILAPVVIC) are cleaved as a signal peptide. Intrachain disulfides connect C105-C376, C270-C283, and C307-C344. N156 carries an N-linked (GlcNAc...) asparagine glycan. The active site involves S198. N-linked (GlcNAc...) asparagine glycans are attached at residues N221 and N271. N-linked (GlcNAc...) asparagine glycans are attached at residues N372 and N383. Catalysis depends on residues D413 and H465.

It belongs to the peptidase S10 family. In terms of tissue distribution, expressed in roots, senescent leaves, stems, flowers and siliques.

It localises to the secreted. Its function is as follows. Probable carboxypeptidase. The polypeptide is Serine carboxypeptidase-like 31 (SCPL31) (Arabidopsis thaliana (Mouse-ear cress)).